The sequence spans 176 residues: Large ribosomal subunit protein uL10 (176 aa).

It belongs to the universal ribosomal protein uL10 family. As to quaternary structure, part of the ribosomal stalk of the 50S ribosomal subunit. The N-terminus interacts with L11 and the large rRNA to form the base of the stalk. The C-terminus forms an elongated spine to which L12 dimers bind in a sequential fashion forming a multimeric L10(L12)X complex.

In terms of biological role, forms part of the ribosomal stalk, playing a central role in the interaction of the ribosome with GTP-bound translation factors. In Streptomyces avermitilis (strain ATCC 31267 / DSM 46492 / JCM 5070 / NBRC 14893 / NCIMB 12804 / NRRL 8165 / MA-4680), this protein is Large ribosomal subunit protein uL10.